The chain runs to 426 residues: Mothers against decapentaplegic homolog 7 (426 aa).

The disordered stretch occupies residues 14-42 (WRSRAPGGEDEEEGVGGGGGGGELRGEGA). Lysine 64 and lysine 70 each carry N6-acetyllysine; alternate. Residues lysine 64 and lysine 70 each participate in a glycyl lysine isopeptide (Lys-Gly) (interchain with G-Cter in ubiquitin); alternate cross-link. The 144-residue stretch at 64-207 (KAVRGAKGHH…LSRLCELESP (144 aa)) folds into the MH1 domain. The segment covering 67 to 76 (RGAKGHHHPH) has biased composition (basic residues). The segment at 67-87 (RGAKGHHHPHPPTSGAGAAGG) is disordered. The Zn(2+) site is built by cysteine 125, cysteine 180, cysteine 192, and histidine 197. A PY-motif motif is present at residues 208–211 (PPPY). Positions 208–217 (PPPYSRYPMD) are important for interaction with SMURF2. At serine 249 the chain carries Phosphoserine. One can recognise an MH2 domain in the interval 261–426 (WCVVAYWEEK…CWLEVIFNSR (166 aa)).

Belongs to the dwarfin/SMAD family. As to quaternary structure, interacts with COPS5. Interacts with STAMBP. Interacts with PPP1R15A. Interacts with NEDD4L. Interacts with RNF111, AXIN1 and AXIN2. Interacts with ACVR1B, SMURF1, SMURF2 and TGFBR1; SMAD7 recruits SMURF1 and SMURF2 to the TGF-beta receptor and regulates its degradation. Interacts with WWP1. Interacts with PDPK1 (via PH domain). Ubiquitinated by WWP1. Interacts with TSC22D1/TSC-22; the interaction requires TGF-beta and the interaction is inhibited by TGFBR1. Post-translationally, phosphorylation on Ser-249 does not affect its stability, nuclear localization or inhibitory function in TGFB signaling; however it affects its ability to regulate transcription. Phosphorylated by PDPK1. Ubiquitinated by WWP1. Polyubiquitinated by RNF111, which is enhanced by AXIN1 and promotes proteasomal degradation. In response to TGF-beta, ubiquitinated by SMURF1; which promotes its degradation. Ubiquitinated by ARK2C, promoting proteasomal degradation, leading to enhance the BMP-Smad signaling. In terms of processing, acetylation prevents ubiquitination and degradation mediated by SMURF1. In terms of tissue distribution, ubiquitous in various organs, with higher levels in brain and kidney.

Its subcellular location is the nucleus. It is found in the cytoplasm. In terms of biological role, antagonist of signaling by TGF-beta (transforming growth factor) type 1 receptor superfamily members; has been shown to inhibit TGF-beta (Transforming growth factor) and activin signaling by associating with their receptors thus preventing SMAD2 access. Functions as an adapter to recruit SMURF2 to the TGF-beta receptor complex. Also acts by recruiting the PPP1R15A-PP1 complex to TGFBR1, which promotes its dephosphorylation. Positively regulates PDPK1 kinase activity by stimulating its dissociation from the 14-3-3 protein YWHAQ which acts as a negative regulator. The protein is Mothers against decapentaplegic homolog 7 (Smad7) of Mus musculus (Mouse).